The chain runs to 78 residues: Small ribosomal subunit protein bS18 (78 aa).

This sequence belongs to the bacterial ribosomal protein bS18 family. As to quaternary structure, part of the 30S ribosomal subunit. Forms a tight heterodimer with protein bS6.

In terms of biological role, binds as a heterodimer with protein bS6 to the central domain of the 16S rRNA, where it helps stabilize the platform of the 30S subunit. In Lactobacillus acidophilus (strain ATCC 700396 / NCK56 / N2 / NCFM), this protein is Small ribosomal subunit protein bS18.